Consider the following 382-residue polypeptide: ATP phosphoribosyltransferase regulatory subunit (382 aa).

Belongs to the class-II aminoacyl-tRNA synthetase family. HisZ subfamily. Heteromultimer composed of HisG and HisZ subunits.

The protein localises to the cytoplasm. The protein operates within amino-acid biosynthesis; L-histidine biosynthesis; L-histidine from 5-phospho-alpha-D-ribose 1-diphosphate: step 1/9. Required for the first step of histidine biosynthesis. May allow the feedback regulation of ATP phosphoribosyltransferase activity by histidine. This chain is ATP phosphoribosyltransferase regulatory subunit, found in Burkholderia multivorans (strain ATCC 17616 / 249).